A 396-amino-acid polypeptide reads, in one-letter code: Acetate kinase (396 aa).

N7 contacts Mg(2+). K14 contributes to the ATP binding site. R88 provides a ligand contact to substrate. D145 functions as the Proton donor/acceptor in the catalytic mechanism. ATP is bound by residues 205–209 (HLGNG), 279–281 (DFR), and 327–331 (GIGEN). Residue E381 coordinates Mg(2+).

The protein belongs to the acetokinase family. As to quaternary structure, homodimer. Mg(2+) serves as cofactor. The cofactor is Mn(2+).

The protein localises to the cytoplasm. The enzyme catalyses acetate + ATP = acetyl phosphate + ADP. The protein operates within metabolic intermediate biosynthesis; acetyl-CoA biosynthesis; acetyl-CoA from acetate: step 1/2. In terms of biological role, catalyzes the formation of acetyl phosphate from acetate and ATP. Can also catalyze the reverse reaction. The sequence is that of Acetate kinase from Campylobacter jejuni (strain RM1221).